The following is a 268-amino-acid chain: Protein MGF 300-1L (268 aa).

The Cytoplasmic segment spans residues 1–175; sequence MVSLTTCCLK…QTFKTFYAKN (175 aa). The helical transmembrane segment at 176-193 threads the bilayer; the sequence is YSLSTLYCIFLAIYYKLY. The Extracellular segment spans residues 194–268; sequence TALRKMVKIY…MYAFSQNDYW (75 aa).

The protein belongs to the asfivirus MGF 300 family.

The protein resides in the host membrane. Its function is as follows. Plays a role in virus cell tropism, and may be required for efficient virus replication in macrophages. The chain is Protein MGF 300-1L from Ornithodoros (relapsing fever ticks).